The sequence spans 409 residues: Lipoyl synthase, mitochondrial (409 aa).

The segment at 21–41 (QQQVPPSEEPRNESGAANPPL) is disordered. Cys-125, Cys-130, Cys-136, Cys-159, Cys-163, Cys-166, and Ser-375 together coordinate [4Fe-4S] cluster. The Radical SAM core domain occupies 142-364 (EEGDGTATAT…EKEALDMGFL (223 aa)).

This sequence belongs to the radical SAM superfamily. Lipoyl synthase family. It depends on [4Fe-4S] cluster as a cofactor.

It localises to the mitochondrion. It catalyses the reaction [[Fe-S] cluster scaffold protein carrying a second [4Fe-4S](2+) cluster] + N(6)-octanoyl-L-lysyl-[protein] + 2 oxidized [2Fe-2S]-[ferredoxin] + 2 S-adenosyl-L-methionine + 4 H(+) = [[Fe-S] cluster scaffold protein] + N(6)-[(R)-dihydrolipoyl]-L-lysyl-[protein] + 4 Fe(3+) + 2 hydrogen sulfide + 2 5'-deoxyadenosine + 2 L-methionine + 2 reduced [2Fe-2S]-[ferredoxin]. It functions in the pathway protein modification; protein lipoylation via endogenous pathway; protein N(6)-(lipoyl)lysine from octanoyl-[acyl-carrier-protein]: step 2/2. Functionally, catalyzes the radical-mediated insertion of two sulfur atoms into the C-6 and C-8 positions of the octanoyl moiety bound to the lipoyl domains of lipoate-dependent enzymes, thereby converting the octanoylated domains into lipoylated derivatives. The protein is Lipoyl synthase, mitochondrial of Trypanosoma brucei gambiense (strain MHOM/CI/86/DAL972).